The chain runs to 448 residues: Probable glycine dehydrogenase (decarboxylating) subunit 1 (448 aa).

It belongs to the GcvP family. N-terminal subunit subfamily. The glycine cleavage system is composed of four proteins: P, T, L and H. In this organism, the P 'protein' is a heterodimer of two subunits.

It catalyses the reaction N(6)-[(R)-lipoyl]-L-lysyl-[glycine-cleavage complex H protein] + glycine + H(+) = N(6)-[(R)-S(8)-aminomethyldihydrolipoyl]-L-lysyl-[glycine-cleavage complex H protein] + CO2. Functionally, the glycine cleavage system catalyzes the degradation of glycine. The P protein binds the alpha-amino group of glycine through its pyridoxal phosphate cofactor; CO(2) is released and the remaining methylamine moiety is then transferred to the lipoamide cofactor of the H protein. The polypeptide is Probable glycine dehydrogenase (decarboxylating) subunit 1 (Exiguobacterium sibiricum (strain DSM 17290 / CCUG 55495 / CIP 109462 / JCM 13490 / 255-15)).